The chain runs to 108 residues: Small ribosomal subunit protein eS25 (108 aa).

The tract at residues 1-36 is disordered; the sequence is MAPKKAQAPPPSSKPAKSGGGKQKKKKWSKGKQKEK. The span at 22-31 shows a compositional bias: basic residues; that stretch reads KQKKKKWSKG.

This sequence belongs to the eukaryotic ribosomal protein eS25 family.

This chain is Small ribosomal subunit protein eS25 (RPS25), found in Solanum lycopersicum (Tomato).